The following is an 82-amino-acid chain: ATP synthase subunit c, chloroplastic (82 aa).

The next 2 membrane-spanning stretches (helical) occupy residues 7 to 27 and 57 to 77; these read AASV…PGIG and LAFM…LLFA.

It belongs to the ATPase C chain family. F-type ATPases have 2 components, F(1) - the catalytic core - and F(0) - the membrane proton channel. F(1) has five subunits: alpha(3), beta(3), gamma(1), delta(1), epsilon(1). F(0) has four main subunits: a(1), b(1), b'(1) and c(10-14). The alpha and beta chains form an alternating ring which encloses part of the gamma chain. F(1) is attached to F(0) by a central stalk formed by the gamma and epsilon chains, while a peripheral stalk is formed by the delta, b and b' chains.

It is found in the plastid. The protein resides in the chloroplast thylakoid membrane. Functionally, f(1)F(0) ATP synthase produces ATP from ADP in the presence of a proton or sodium gradient. F-type ATPases consist of two structural domains, F(1) containing the extramembraneous catalytic core and F(0) containing the membrane proton channel, linked together by a central stalk and a peripheral stalk. During catalysis, ATP synthesis in the catalytic domain of F(1) is coupled via a rotary mechanism of the central stalk subunits to proton translocation. In terms of biological role, key component of the F(0) channel; it plays a direct role in translocation across the membrane. A homomeric c-ring of between 10-14 subunits forms the central stalk rotor element with the F(1) delta and epsilon subunits. The chain is ATP synthase subunit c, chloroplastic from Rhodomonas salina (Cryptomonas salina).